The primary structure comprises 171 residues: 3-hydroxydecanoyl-[acyl-carrier-protein] dehydratase (171 aa).

Histidine 70 is a catalytic residue.

The protein belongs to the thioester dehydratase family. FabA subfamily. Homodimer.

The protein resides in the cytoplasm. It carries out the reaction a (3R)-hydroxyacyl-[ACP] = a (2E)-enoyl-[ACP] + H2O. The enzyme catalyses (3R)-hydroxydecanoyl-[ACP] = (2E)-decenoyl-[ACP] + H2O. It catalyses the reaction (2E)-decenoyl-[ACP] = (3Z)-decenoyl-[ACP]. It participates in lipid metabolism; fatty acid biosynthesis. Necessary for the introduction of cis unsaturation into fatty acids. Catalyzes the dehydration of (3R)-3-hydroxydecanoyl-ACP to E-(2)-decenoyl-ACP and then its isomerization to Z-(3)-decenoyl-ACP. Can catalyze the dehydratase reaction for beta-hydroxyacyl-ACPs with saturated chain lengths up to 16:0, being most active on intermediate chain length. The chain is 3-hydroxydecanoyl-[acyl-carrier-protein] dehydratase from Pseudomonas fluorescens (strain ATCC BAA-477 / NRRL B-23932 / Pf-5).